The chain runs to 92 residues: Neurophysin 2 (92 aa).

7 cysteine pairs are disulfide-bonded: Cys-10–Cys-54, Cys-13–Cys-27, Cys-21–Cys-44, Cys-28–Cys-34, Cys-61–Cys-73, Cys-67–Cys-85, and Cys-74–Cys-79.

It belongs to the vasopressin/oxytocin family. In terms of assembly, there is an equilibrium between the monomeric and dimeric forms. On peptide binding the dimeric form predominates. A shorter neurophysin molecule (1-90) also exists and is probably derived from the complete protein by proteolytic degradation (in vivo or after extraction).

It localises to the secreted. Neurophysin 2 specifically binds vasopressin. The polypeptide is Neurophysin 2 (AVP) (Loxodonta africana (African elephant)).